A 503-amino-acid polypeptide reads, in one-letter code: Cytosol aminopeptidase (503 aa).

Mn(2+) contacts are provided by K269 and D274. K281 is a catalytic residue. 3 residues coordinate Mn(2+): D292, D351, and E353. The active site involves R355.

This sequence belongs to the peptidase M17 family. The cofactor is Mn(2+).

It is found in the cytoplasm. It carries out the reaction Release of an N-terminal amino acid, Xaa-|-Yaa-, in which Xaa is preferably Leu, but may be other amino acids including Pro although not Arg or Lys, and Yaa may be Pro. Amino acid amides and methyl esters are also readily hydrolyzed, but rates on arylamides are exceedingly low.. It catalyses the reaction Release of an N-terminal amino acid, preferentially leucine, but not glutamic or aspartic acids.. Presumably involved in the processing and regular turnover of intracellular proteins. Catalyzes the removal of unsubstituted N-terminal amino acids from various peptides. The sequence is that of Cytosol aminopeptidase from Vibrio cholerae serotype O1 (strain ATCC 39541 / Classical Ogawa 395 / O395).